A 346-amino-acid chain; its full sequence is Alkylated DNA repair protein ALKBH8 homolog (346 aa).

Residues 1–21 (MVQPRFVRPTQSSPSSISGEP) are disordered. Low complexity predominate over residues 12–21 (SSPSSISGEP). The region spanning 24-102 (SNLYVANCGP…RSLHIRYSVL (79 aa)) is the RRM domain. The Fe2OG dioxygenase domain maps to 208-328 (NLDQLTVNEY…RVSFTLRKVR (121 aa)). Fe cation contacts are provided by histidine 226, aspartate 228, and histidine 298. The 2-oxoglutarate site is built by arginine 319 and arginine 325.

The protein belongs to the alkB family. It depends on Fe(2+) as a cofactor.

Its function is as follows. Binds tRNA and catalyzes the iron and alpha-ketoglutarate dependent hydroxylation of 5-methylcarboxymethyl uridine at the wobble position of the anticodon loop in tRNA via its dioxygenase domain, giving rise to 5-(S)-methoxycarbonylhydroxymethyluridine. In Arabidopsis thaliana (Mouse-ear cress), this protein is Alkylated DNA repair protein ALKBH8 homolog.